The sequence spans 204 residues: uncharacterized protein (204 aa).

In terms of tissue distribution, component of the acid-soluble organic matrix of the aragonitic skeleton (at protein level).

It localises to the secreted. This is an uncharacterized protein from Acropora millepora (Staghorn coral).